We begin with the raw amino-acid sequence, 295 residues long: Ankyrin repeat and SOCS box protein 17 (295 aa).

The ANK repeat unit spans residues 146–176 (SGITPLLYVAQTRQSNILKILLQYGILEREK). One can recognise an SOCS box domain in the interval 232 to 295 (LGRRPIISNW…RLQKYLNLES (64 aa)).

It belongs to the ankyrin SOCS box (ASB) family.

Its pathway is protein modification; protein ubiquitination. Its function is as follows. May be a substrate-recognition component of a SCF-like ECS (Elongin-Cullin-SOCS-box protein) E3 ubiquitin-protein ligase complex which mediates the ubiquitination and subsequent proteasomal degradation of target proteins. The polypeptide is Ankyrin repeat and SOCS box protein 17 (ASB17) (Canis lupus familiaris (Dog)).